We begin with the raw amino-acid sequence, 206 residues long: Thiamine-phosphate synthase (206 aa).

Residues 35 to 39 (QLRDK) and Asn-67 contribute to the 4-amino-2-methyl-5-(diphosphooxymethyl)pyrimidine site. Residues Asp-68 and Asp-87 each coordinate Mg(2+). Residue Ser-106 participates in 4-amino-2-methyl-5-(diphosphooxymethyl)pyrimidine binding. 132–134 (TGT) lines the 2-[(2R,5Z)-2-carboxy-4-methylthiazol-5(2H)-ylidene]ethyl phosphate pocket. Lys-135 contacts 4-amino-2-methyl-5-(diphosphooxymethyl)pyrimidine. Residues Gly-163 and 183-184 (IS) each bind 2-[(2R,5Z)-2-carboxy-4-methylthiazol-5(2H)-ylidene]ethyl phosphate.

It belongs to the thiamine-phosphate synthase family. Requires Mg(2+) as cofactor.

The catalysed reaction is 2-[(2R,5Z)-2-carboxy-4-methylthiazol-5(2H)-ylidene]ethyl phosphate + 4-amino-2-methyl-5-(diphosphooxymethyl)pyrimidine + 2 H(+) = thiamine phosphate + CO2 + diphosphate. It carries out the reaction 2-(2-carboxy-4-methylthiazol-5-yl)ethyl phosphate + 4-amino-2-methyl-5-(diphosphooxymethyl)pyrimidine + 2 H(+) = thiamine phosphate + CO2 + diphosphate. The enzyme catalyses 4-methyl-5-(2-phosphooxyethyl)-thiazole + 4-amino-2-methyl-5-(diphosphooxymethyl)pyrimidine + H(+) = thiamine phosphate + diphosphate. Its pathway is cofactor biosynthesis; thiamine diphosphate biosynthesis; thiamine phosphate from 4-amino-2-methyl-5-diphosphomethylpyrimidine and 4-methyl-5-(2-phosphoethyl)-thiazole: step 1/1. Condenses 4-methyl-5-(beta-hydroxyethyl)thiazole monophosphate (THZ-P) and 2-methyl-4-amino-5-hydroxymethyl pyrimidine pyrophosphate (HMP-PP) to form thiamine monophosphate (TMP). This chain is Thiamine-phosphate synthase, found in Methanospirillum hungatei JF-1 (strain ATCC 27890 / DSM 864 / NBRC 100397 / JF-1).